The chain runs to 124 residues: Fluoride-specific ion channel FluC (124 aa).

The next 4 helical transmembrane spans lie at 1–21, 35–55, 66–86, and 99–119; these read MFNL…RHLT, WGTM…IAIL, LFVA…SLDF, and FGYA…GLWL. The Na(+) site is built by Gly-74 and Thr-77.

It belongs to the fluoride channel Fluc/FEX (TC 1.A.43) family.

It localises to the cell inner membrane. The catalysed reaction is fluoride(in) = fluoride(out). Its activity is regulated as follows. Na(+) is not transported, but it plays an essential structural role and its presence is essential for fluoride channel function. Functionally, fluoride-specific ion channel. Important for reducing fluoride concentration in the cell, thus reducing its toxicity. The protein is Fluoride-specific ion channel FluC of Mesorhizobium japonicum (strain LMG 29417 / CECT 9101 / MAFF 303099) (Mesorhizobium loti (strain MAFF 303099)).